A 397-amino-acid polypeptide reads, in one-letter code: Riboflavin biosynthesis protein RibBA (397 aa).

The tract at residues 1-199 is DHBP synthase; that stretch reads MFHRIEEALE…IEDLIAYRRH (199 aa). D-ribulose 5-phosphate contacts are provided by residues 26–27, Asp-31, 138–142, and Glu-162; these read RE and RAGHT. Glu-27 lines the Mg(2+) pocket. His-141 serves as a coordination point for Mg(2+). The segment at 200–397 is GTP cyclohydrolase II; that stretch reads HETFVTKEVE…VTKLGHLLNL (198 aa). Position 250–254 (250–254) interacts with GTP; sequence RVHSE. Zn(2+) is bound by residues Cys-255, Cys-266, and Cys-268. GTP contacts are provided by residues Gln-271, 293–295, and Thr-315; that span reads EGR. Residue Asp-327 is the Proton acceptor; for GTP cyclohydrolase activity of the active site. Arg-329 acts as the Nucleophile; for GTP cyclohydrolase activity in catalysis. Positions 350 and 355 each coordinate GTP.

In the N-terminal section; belongs to the DHBP synthase family. The protein in the C-terminal section; belongs to the GTP cyclohydrolase II family. Requires Mg(2+) as cofactor. Mn(2+) serves as cofactor. It depends on Zn(2+) as a cofactor.

The enzyme catalyses D-ribulose 5-phosphate = (2S)-2-hydroxy-3-oxobutyl phosphate + formate + H(+). It catalyses the reaction GTP + 4 H2O = 2,5-diamino-6-hydroxy-4-(5-phosphoribosylamino)-pyrimidine + formate + 2 phosphate + 3 H(+). It participates in cofactor biosynthesis; riboflavin biosynthesis; 2-hydroxy-3-oxobutyl phosphate from D-ribulose 5-phosphate: step 1/1. The protein operates within cofactor biosynthesis; riboflavin biosynthesis; 5-amino-6-(D-ribitylamino)uracil from GTP: step 1/4. Functionally, catalyzes the conversion of D-ribulose 5-phosphate to formate and 3,4-dihydroxy-2-butanone 4-phosphate. Catalyzes the conversion of GTP to 2,5-diamino-6-ribosylamino-4(3H)-pyrimidinone 5'-phosphate (DARP), formate and pyrophosphate. This is Riboflavin biosynthesis protein RibBA from Bacillus cytotoxicus (strain DSM 22905 / CIP 110041 / 391-98 / NVH 391-98).